A 206-amino-acid polypeptide reads, in one-letter code: Pyridoxine/pyridoxamine 5'-phosphate oxidase (206 aa).

Residues 53-58 (RMVLLK), 68-69 (YT), Lys75, and Gln97 contribute to the FMN site. A substrate-binding site is contributed by Lys58. Substrate contacts are provided by Tyr115, Arg119, and Ser123. FMN is bound by residues 132 to 133 (QS) and Trp177. 183 to 185 (RLH) provides a ligand contact to substrate. An FMN-binding site is contributed by Arg187.

The protein belongs to the pyridoxamine 5'-phosphate oxidase family. As to quaternary structure, homodimer. It depends on FMN as a cofactor.

It catalyses the reaction pyridoxamine 5'-phosphate + O2 + H2O = pyridoxal 5'-phosphate + H2O2 + NH4(+). The catalysed reaction is pyridoxine 5'-phosphate + O2 = pyridoxal 5'-phosphate + H2O2. It functions in the pathway cofactor metabolism; pyridoxal 5'-phosphate salvage; pyridoxal 5'-phosphate from pyridoxamine 5'-phosphate: step 1/1. The protein operates within cofactor metabolism; pyridoxal 5'-phosphate salvage; pyridoxal 5'-phosphate from pyridoxine 5'-phosphate: step 1/1. Catalyzes the oxidation of either pyridoxine 5'-phosphate (PNP) or pyridoxamine 5'-phosphate (PMP) into pyridoxal 5'-phosphate (PLP). In Agrobacterium fabrum (strain C58 / ATCC 33970) (Agrobacterium tumefaciens (strain C58)), this protein is Pyridoxine/pyridoxamine 5'-phosphate oxidase.